The chain runs to 219 residues: ADP-sugar pyrophosphatase (219 aa).

The residue at position 1 (Met-1) is an N-acetylmethionine. Phosphoserine occurs at positions 3 and 10. Position 28 (Trp-28) interacts with substrate. Lys-42 is covalently cross-linked (Glycyl lysine isopeptide (Lys-Gly) (interchain with G-Cter in SUMO2)). Position 45 is a phosphothreonine (Thr-45). Substrate contacts are provided by residues 46–47 (WE) and Arg-51. Residues 57–197 (QTADGVAVIP…EEHLTVDARV (141 aa)) enclose the Nudix hydrolase domain. A Phosphotyrosine modification is found at Tyr-74. Residue Arg-84 coordinates substrate. Position 96 (Ala-96) interacts with Mg(2+). A Nudix box motif is present at residues 97–118 (GLIDDGETPEAAALRELEEETG). Leu-98 contacts substrate. Positions 112 and 116 each coordinate Mg(2+). A substrate-binding site is contributed by Asp-133. Mg(2+) is bound at residue Glu-166. N6-acetyllysine is present on residues Lys-210 and Lys-218.

The protein belongs to the Nudix hydrolase family. As to quaternary structure, homodimer. Interacts with PARG. Mg(2+) serves as cofactor. Phosphorylation at Thr-45 is required for homodimer stability; dephosphorylation results in destabilization of the homodimer. Dephosphorylation at Thr-45 promotes the ATP-synthesis activity. As to expression, widely expressed. Most abundant in liver.

The protein resides in the nucleus. The catalysed reaction is D-ribose 5-phosphate + ATP + H(+) = ADP-D-ribose + diphosphate. It catalyses the reaction ADP-D-ribose + H2O = D-ribose 5-phosphate + AMP + 2 H(+). The enzyme catalyses 8-oxo-dGDP + H2O = 8-oxo-dGMP + phosphate + H(+). Its function is as follows. Enzyme that can either act as an ADP-sugar pyrophosphatase in absence of diphosphate or catalyze the synthesis of ATP in presence of diphosphate. In absence of diphosphate, hydrolyzes with similar activities various modified nucleoside diphosphates such as ADP-ribose, ADP-mannose, ADP-glucose, 8-oxo-GDP and 8-oxo-dGDP. Can also hydrolyze other nucleotide sugars with low activity. In presence of diphosphate, mediates the synthesis of ATP in the nucleus by catalyzing the conversion of ADP-ribose to ATP and ribose 5-phosphate. Nuclear ATP synthesis takes place when dephosphorylated at Thr-45. Nuclear ATP generation is required for extensive chromatin remodeling events that are energy-consuming. Does not play a role in U8 snoRNA decapping activity. Binds U8 snoRNA. The chain is ADP-sugar pyrophosphatase (NUDT5) from Homo sapiens (Human).